The primary structure comprises 269 residues: Interleukin-1 beta (269 aa).

A propeptide spanning residues 1 to 117 is cleaved from the precursor; sequence MATVPELNCE…DDDDNLLVCD (117 aa).

Belongs to the IL-1 family. Monomer. Interacts with MEFV. Interacts with integrins ITGAV:ITGBV and ITGA5:ITGB1; integrin-binding is required for IL1B signaling. Interacts with cargo receptor TMED10; the interaction is direct and is required for the secretion of IL1B mature form. Interacts with HSP90AB1; the interaction facilitates cargo translocation into the ERGIC. Interacts with HSP90B1; the interaction facilitates cargo translocation into the ERGIC. Expressed in activated macrophages (at protein level).

The protein resides in the cytoplasm. Its subcellular location is the cytosol. It localises to the secreted. The protein localises to the lysosome. It is found in the extracellular exosome. Its function is as follows. Potent pro-inflammatory cytokine. Initially discovered as the major endogenous pyrogen, induces prostaglandin synthesis, neutrophil influx and activation, T-cell activation and cytokine production, B-cell activation and antibody production, and fibroblast proliferation and collagen production. Promotes Th17 differentiation of T-cells. Synergizes with IL12/interleukin-12 to induce IFNG synthesis from T-helper 1 (Th1) cells. Plays a role in angiogenesis by inducing VEGF production synergistically with TNF and IL6. Involved in transduction of inflammation downstream of pyroptosis: its mature form is specifically released in the extracellular milieu by passing through the gasdermin-D (GSDMD) pore. In Mus musculus (Mouse), this protein is Interleukin-1 beta (Il1b).